The sequence spans 491 residues: Lysine--tRNA ligase (491 aa).

Mg(2+) contacts are provided by Glu400 and Glu407.

This sequence belongs to the class-II aminoacyl-tRNA synthetase family. Homodimer. The cofactor is Mg(2+).

It is found in the cytoplasm. The catalysed reaction is tRNA(Lys) + L-lysine + ATP = L-lysyl-tRNA(Lys) + AMP + diphosphate. This is Lysine--tRNA ligase from Mesomycoplasma hyopneumoniae (strain 7448) (Mycoplasma hyopneumoniae).